A 258-amino-acid chain; its full sequence is Deoxyribose-phosphate aldolase (258 aa).

Asp102 (proton donor/acceptor) is an active-site residue. Residue Lys165 is the Schiff-base intermediate with acetaldehyde of the active site. Lys199 serves as the catalytic Proton donor/acceptor.

This sequence belongs to the DeoC/FbaB aldolase family. DeoC type 2 subfamily.

It is found in the cytoplasm. The catalysed reaction is 2-deoxy-D-ribose 5-phosphate = D-glyceraldehyde 3-phosphate + acetaldehyde. The protein operates within carbohydrate degradation; 2-deoxy-D-ribose 1-phosphate degradation; D-glyceraldehyde 3-phosphate and acetaldehyde from 2-deoxy-alpha-D-ribose 1-phosphate: step 2/2. Functionally, catalyzes a reversible aldol reaction between acetaldehyde and D-glyceraldehyde 3-phosphate to generate 2-deoxy-D-ribose 5-phosphate. The sequence is that of Deoxyribose-phosphate aldolase from Aliivibrio salmonicida (strain LFI1238) (Vibrio salmonicida (strain LFI1238)).